A 301-amino-acid polypeptide reads, in one-letter code: Probable 2-(5''-triphosphoribosyl)-3'-dephosphocoenzyme-A synthase (301 aa).

The protein belongs to the CitG/MdcB family.

It carries out the reaction 3'-dephospho-CoA + ATP = 2'-(5''-triphospho-alpha-D-ribosyl)-3'-dephospho-CoA + adenine. This chain is Probable 2-(5''-triphosphoribosyl)-3'-dephosphocoenzyme-A synthase, found in Pectobacterium carotovorum subsp. carotovorum (strain PC1).